The primary structure comprises 534 residues: Cytochrome P450 monooxygenase btcB (534 aa).

Asn-20 carries N-linked (GlcNAc...) asparagine glycosylation. A helical transmembrane segment spans residues 41–61 (ALAFLCGALLFGFVYSVFYNL). Asn-335, Asn-413, and Asn-431 each carry an N-linked (GlcNAc...) asparagine glycan. Position 484 (Cys-484) interacts with heme.

The protein belongs to the cytochrome P450 family. Heme serves as cofactor.

It localises to the membrane. The protein operates within secondary metabolite biosynthesis; terpenoid biosynthesis. Functionally, cytochrome P4590 monooxygenase part of the gene cluster that mediates the biosynthesis of betaestacins. The bifunctional terpene synthase btcA converts isopentenyl diphosphate (IPP) and dimethylallyl diphosphate (DMAPP) into the sesterterpene betaestacin I. The C-terminal prenyltransferase (PT) domain of btcA catalyzes formation of GFPP, whereas the N-terminal terpene cyclase (TC) domain catalyzes the cyclization of GFPP into betaestacin I. The cytochrome P450 monooxygenase btcB oxidizes the C25 methyl group of betaestacin I to yield the carboxylic acid betaestacin IV via the alcohol betaestacin III. The cytochrome P450 monooxygenase btcC further catalyzes the multistep oxidation of betaestacin IV to produce several compounds, including betaestacins Va, Vb, Vc and VI. The chain is Cytochrome P450 monooxygenase btcB from Colletotrichum orbiculare (strain 104-T / ATCC 96160 / CBS 514.97 / LARS 414 / MAFF 240422) (Cucumber anthracnose fungus).